Consider the following 615-residue polypeptide: Angiotensin-converting enzyme (615 aa).

Positions 1-17 are cleaved as a signal peptide; that stretch reads MRLFLLALLATLAVTQA. In terms of domain architecture, Peptidase M2 spans 19-607; sequence VKEEIQAKEY…IKNNVHIGWT (589 aa). N53 carries N-linked (GlcNAc...) asparagine glycosylation. A disulfide bond links C133 and C141. N-linked (GlcNAc...) asparagine glycosylation is found at N196 and N311. C336 and C354 form a disulfide bridge. H367 serves as a coordination point for Zn(2+). E368 serves as the catalytic Proton acceptor. The Zn(2+) site is built by H371 and E395. Residue H497 is the Proton donor of the active site. A disulfide bond links C522 and C540.

It belongs to the peptidase M2 family. Zn(2+) is required as a cofactor. Glycosylated. In terms of tissue distribution, expressed in vesicular structures in spermatocytes and early spermatids (at protein level).

The protein localises to the secreted. It localises to the extracellular space. The catalysed reaction is Release of a C-terminal dipeptide, oligopeptide-|-Xaa-Yaa, when Xaa is not Pro, and Yaa is neither Asp nor Glu. Thus, conversion of angiotensin I to angiotensin II, with increase in vasoconstrictor activity, but no action on angiotensin II.. With respect to regulation, inhibited by captopril and, to a lesser extent, by lisinopril, trandolaprilat, fosinoprilat and enalaprilat. Its function is as follows. May be involved in the specific maturation or degradation of a number of bioactive peptides. May play a role in the contractions of the heart, gut and testes, and in spermatid differentiation. The chain is Angiotensin-converting enzyme (Ance) from Drosophila melanogaster (Fruit fly).